The chain runs to 265 residues: 3-methyl-2-oxobutanoate hydroxymethyltransferase (265 aa).

Residues Asp-46 and Asp-85 each coordinate Mg(2+). Residues 46–47 (DS), Asp-85, and Lys-114 contribute to the 3-methyl-2-oxobutanoate site. Residue Glu-116 participates in Mg(2+) binding. Catalysis depends on Glu-183, which acts as the Proton acceptor.

Belongs to the PanB family. In terms of assembly, homodecamer; pentamer of dimers. The cofactor is Mg(2+).

It localises to the cytoplasm. It carries out the reaction 3-methyl-2-oxobutanoate + (6R)-5,10-methylene-5,6,7,8-tetrahydrofolate + H2O = 2-dehydropantoate + (6S)-5,6,7,8-tetrahydrofolate. It participates in cofactor biosynthesis; coenzyme A biosynthesis. Its function is as follows. Catalyzes the reversible reaction in which hydroxymethyl group from 5,10-methylenetetrahydrofolate is transferred onto alpha-ketoisovalerate to form ketopantoate. The protein is 3-methyl-2-oxobutanoate hydroxymethyltransferase of Pyrobaculum calidifontis (strain DSM 21063 / JCM 11548 / VA1).